A 505-amino-acid polypeptide reads, in one-letter code: Ribosomal RNA small subunit methyltransferase F (505 aa).

S-adenosyl-L-methionine-binding positions include 123 to 129, glutamate 147, aspartate 174, and aspartate 192; that span reads ASAPGSK. Cysteine 245 functions as the Nucleophile in the catalytic mechanism. Residues 409–437 form a disordered region; it reads GTNANNNSNTNPNNNANTNPNNNSNTNPR. Over residues 410–435 the composition is skewed to low complexity; sequence TNANNNSNTNPNNNANTNPNNNSNTN.

The protein belongs to the class I-like SAM-binding methyltransferase superfamily. RsmB/NOP family.

The protein localises to the cytoplasm. The catalysed reaction is cytidine(1407) in 16S rRNA + S-adenosyl-L-methionine = 5-methylcytidine(1407) in 16S rRNA + S-adenosyl-L-homocysteine + H(+). Functionally, specifically methylates the cytosine at position 1407 (m5C1407) of 16S rRNA. This chain is Ribosomal RNA small subunit methyltransferase F, found in Shewanella denitrificans (strain OS217 / ATCC BAA-1090 / DSM 15013).